The sequence spans 339 residues: MVKKNDLFVDVSSHNGYDITGILEQMGTTNTIIKISESTTYLNPCLSAQVEQSNPIGFYHFARFGGDVAEAEREAQFFLDNVPMQVKYLVLDYEDDPSGDAQANTNACLRFMQMIADAGYKPIYYSYKPFTHDNVDYQQILAQFPNSLWIAGYGLNDGTANFEYFPSMDGIRWWQYSSNPFDKNIVLLDDEEDDKPKTAGTWKQDSKGWWFRRNNGSFPYNKWEKIGGVWYYFDSKGYCLTSEWLKDNEKWYYLKDNGAMATGWVLVGSEWYYMDDSGAMVTGWVKYKNNWYYMTNERGNMVSNEFIKSGKGWYFMNTNGELADNPSFTKEPDGLITVA.

The region spanning 5–206 (NDLFVDVSSH…KTAGTWKQDS (202 aa)) is the Ch-type lysozyme domain. Catalysis depends on residues aspartate 10, aspartate 92, and glutamate 94. 6 Cell wall-binding repeats span residues 200–219 (GTWK…GSFP), 220–239 (YNKW…KGYC), 241–260 (TSEW…NGAM), 261–280 (ATGW…SGAM), 281–300 (VTGW…ERGN), and 303–322 (SNEF…NGEL).

The protein belongs to the glycosyl hydrolase 25 family.

It carries out the reaction Hydrolysis of (1-&gt;4)-beta-linkages between N-acetylmuramic acid and N-acetyl-D-glucosamine residues in a peptidoglycan and between N-acetyl-D-glucosamine residues in chitodextrins.. Responsible for the separation of the host daughter cells at the end of cell division and participates in the liberation of progeny bacteriophage into the medium. Strictly depends on the presence of choline-containing cell walls for activity. This Streptococcus pneumoniae (Bacteriophage Cp-1) protein is Lysozyme (CPL1).